Reading from the N-terminus, the 146-residue chain is Hemoglobin subunit beta-2 (146 aa).

The 145-residue stretch at 2–146 (HWSAEEKQLI…VAHALARRYH (145 aa)) folds into the Globin domain. The heme b site is built by H63 and H92.

This sequence belongs to the globin family. As to quaternary structure, heterotetramer of two alpha chains and two beta chains. Red blood cells.

Involved in oxygen transport from the lung to the various peripheral tissues. The polypeptide is Hemoglobin subunit beta-2 (HBB2) (Naja naja (Indian cobra)).